The primary structure comprises 628 residues: Carbon monoxide dehydrogenase 1 (628 aa).

Positions 44, 52, 53, 56, 61, and 75 each coordinate [4Fe-4S] cluster. The [Ni-4Fe-5S] cluster site is built by H266, C302, C340, C448, C478, and C519.

The protein belongs to the Ni-containing carbon monoxide dehydrogenase family. In terms of assembly, homodimer. [4Fe-4S] cluster serves as cofactor. [Ni-4Fe-5S] cluster is required as a cofactor.

The catalysed reaction is CO + 2 oxidized [2Fe-2S]-[ferredoxin] + H2O = 2 reduced [2Fe-2S]-[ferredoxin] + CO2 + 2 H(+). In terms of biological role, CODH oxidizes carbon monoxide coupled, via CooF, to the reduction of a hydrogen cation by a hydrogenase (possibly CooH). In Methanosarcina acetivorans (strain ATCC 35395 / DSM 2834 / JCM 12185 / C2A), this protein is Carbon monoxide dehydrogenase 1 (cooS1).